Here is a 109-residue protein sequence, read N- to C-terminus: Prefoldin subunit 1 (109 aa).

Residue Ser2 is modified to N-acetylserine.

The protein belongs to the prefoldin subunit beta family. Heterohexamer of two PFD-alpha type and four PFD-beta type subunits.

Its subcellular location is the cytoplasm. Functionally, binds specifically to cytosolic chaperonin (c-CPN) and transfers target proteins to it. Binds to nascent polypeptide chain and promotes folding in an environment in which there are many competing pathways for nonnative proteins. The chain is Prefoldin subunit 1 (PFD1) from Saccharomyces cerevisiae (strain ATCC 204508 / S288c) (Baker's yeast).